Consider the following 583-residue polypeptide: CD166 antigen (583 aa).

The first 27 residues, 1 to 27, serve as a signal peptide directing secretion; that stretch reads MESKGASSCRLLFCLLISATVFRPGLG. 2 consecutive Ig-like V-type domains span residues 28 to 120 and 125 to 234; these read WYTV…TEDN and PTIV…KTIH. Topologically, residues 28 to 527 are extracellular; it reads WYTVNSAYGD…NREKVNDQAK (500 aa). 2 disulfides stabilise this stretch: Cys43–Cys113 and Cys157–Cys220. Residues Asn91, Asn95, Asn167, Asn265, Asn306, Asn361, Asn457, Asn480, and Asn499 are each glycosylated (N-linked (GlcNAc...) asparagine). 3 consecutive Ig-like C2-type domains span residues 245 to 328, 333 to 409, and 416 to 501; these read PTEQ…TAIT, DLSL…ESLT, and PQIK…LNVS. 3 disulfides stabilise this stretch: Cys270–Cys313, Cys354–Cys392, and Cys435–Cys485. Residues 528 to 549 form a helical membrane-spanning segment; the sequence is LIVGIVVGLLLAALVAGVVYWL. The Cytoplasmic portion of the chain corresponds to 550 to 583; that stretch reads YMKKSKTASKHVNKDLGNMEENKKLEENNHKTEA. The interval 562–583 is disordered; that stretch reads NKDLGNMEENKKLEENNHKTEA. Residues 569-583 show a composition bias toward basic and acidic residues; the sequence is EENKKLEENNHKTEA.

In terms of assembly, homodimer. Interacts (via extracellular domain) with CD6 (via extracellular domain). Homodimerization and interaction with CD6 involve the same region and cannot occur simultaneously. The affinity for CD6 is much higher than the affinity for self-association. Interacts (via glycosylated extracellular domain) with LGALS1 and LGALS3. Interaction with LGALS1 or LGALS3 inhibits interaction with CD6. In terms of processing, glycosylated. As to expression, detected on hematopoietic stem cells derived from umbilical cord blood. Detected on lymph vessel endothelial cells, skin and tonsil. Detected on peripheral blood monocytes. Detected on monocyte-derived dendritic cells (at protein level). Detected at low levels in spleen, placenta, liver. Expressed by activated T-cells, B-cells, monocytes and thymic epithelial cells. Isoform 1 and isoform 3 are detected in vein and artery endothelial cells, astrocytes, keratinocytes and artery smooth muscle cells. Expressed by neurons in the brain. Restricted expression in tumor cell lines. Detected in highly metastasizing melanoma cell lines.

The protein localises to the cell membrane. It is found in the cell projection. The protein resides in the axon. It localises to the dendrite. Its subcellular location is the secreted. Its function is as follows. Cell adhesion molecule that mediates both heterotypic cell-cell contacts via its interaction with CD6, as well as homotypic cell-cell contacts. Promotes T-cell activation and proliferation via its interactions with CD6. Contributes to the formation and maturation of the immunological synapse via its interactions with CD6. Mediates homotypic interactions with cells that express ALCAM. Acts as a ligand for the LILRB4 receptor, enhancing LILRB4-mediated inhibition of T cell proliferation. Required for normal hematopoietic stem cell engraftment in the bone marrow. Mediates attachment of dendritic cells onto endothelial cells via homotypic interaction. Inhibits endothelial cell migration and promotes endothelial tube formation via homotypic interactions. Required for normal organization of the lymph vessel network. Required for normal hematopoietic stem cell engraftment in the bone marrow. Plays a role in hematopoiesis; required for normal numbers of hematopoietic stem cells in bone marrow. Promotes in vitro osteoblast proliferation and differentiation. Promotes neurite extension, axon growth and axon guidance; axons grow preferentially on surfaces that contain ALCAM. Mediates outgrowth and pathfinding for retinal ganglion cell axons. Inhibits activities of membrane-bound isoforms by competing for the same interaction partners. Inhibits cell attachment via homotypic interactions. Promotes endothelial cell migration. Inhibits endothelial cell tube formation. The polypeptide is CD166 antigen (ALCAM) (Homo sapiens (Human)).